Consider the following 512-residue polypeptide: Glycine betaine transporter OpuD (512 aa).

The next 12 helical transmembrane spans lie at 5 to 25, 45 to 65, 82 to 102, 135 to 155, 186 to 206, 222 to 242, 257 to 277, 312 to 332, 343 to 363, 395 to 415, 441 to 461, and 464 to 484; these read ISSV…WGVI, FGWY…FLIF, FGLL…GLVF, FFHW…CIAY, IDCI…GLGA, AFIV…LSAW, MVLA…VLIM, WTIF…IFIA, FLIG…SIFG, LTMV…ITSA, WGII…LAAL, and TAIL…ASLY.

It belongs to the BCCT transporter (TC 2.A.15) family.

It is found in the cell membrane. With respect to regulation, activity is stimulated by high osmolarity. Its function is as follows. High-affinity uptake of glycine betaine. Does not mediate either carnitine or choline uptake. The chain is Glycine betaine transporter OpuD (opuD) from Bacillus subtilis (strain 168).